Reading from the N-terminus, the 553-residue chain is Cytokine-like nuclear factor N-PAC (553 aa).

Residues 8 to 66 enclose the PWWP domain; the sequence is LGDLVWGKLGRYPPWPGKIVNPPKDLKKPRGKKCFFVKFFGTEDHAWIKVEQLKPYHAH. Basic and acidic residues-rich tracts occupy residues 92–145 and 162–182; these read RAKG…EGKK and RAQEQSPRKRGRPPKDEKDLT. The segment at 92–188 is disordered; it reads RAKGKDQTSS…KDLTIPESST (97 aa). Position 130 is a phosphoserine (serine 130). A Glycyl lysine isopeptide (Lys-Gly) (interchain with G-Cter in SUMO2) cross-link involves residue lysine 135. Serine 167 carries the post-translational modification Phosphoserine. The a.T hook DNA-binding region spans 168 to 180; that stretch reads PRKRGRPPKDEKD. Glycyl lysine isopeptide (Lys-Gly) (interchain with G-Cter in SUMO2) cross-links involve residues lysine 176, lysine 179, lysine 201, and lysine 211. The interaction with histone H3 stretch occupies residues 214–217; it reads DPHF. The interval 216 to 225 is interaction with KDM1B; sequence HFHHFLLSQT. Glycyl lysine isopeptide (Lys-Gly) (interchain with G-Cter in SUMO2) cross-links involve residues lysine 227, lysine 237, lysine 240, and lysine 269. The segment at 261–553 is dehydrogenase domain; sequence GSITPTDKKI…MSAVYRAYIH (293 aa). Residue 271-285 participates in NAD(+) binding; that stretch reads GFLGLGLMGSGIVSN. Lysine 302 participates in a covalent cross-link: Glycyl lysine isopeptide (Lys-Gly) (interchain with G-Cter in SUMO2). Threonine 362 and lysine 505 together coordinate NAD(+). Serine 540 bears the Phosphoserine mark.

The protein belongs to the HIBADH-related family. NP60 subfamily. Homotetramere. Interacts with MAPK14. Interacts with KDM1B at nucleosomes; this interaction stimulates H3K4me1 and H3K4me2 demethylation. Binds to mononucleosomes. Interacts with GATA4; the interaction is required for a synergistic activation of GATA4 target genes transcription.

The protein localises to the nucleus. It localises to the chromosome. In terms of biological role, cytokine-like nuclear factor with chromatin gene reader activity involved in chromatin modification and regulation of gene expression. Acts as a nucleosome-destabilizing factor that is recruited to genes during transcriptional activation. Recognizes and binds histone H3 without a preference for specific epigenetic markers and also binds DNA. Interacts with KDM1B and promotes its histone demethylase activity by facilitating the capture of H3 tails, they form a multifunctional enzyme complex that modifies transcribed chromatin and facilitates Pol II transcription through nucleosomes. Stimulates the acetylation of 'Lys-56' of nucleosomal histone H3 (H3K56ac) by EP300. With GATA4, co-binds a defined set of heart development genes and coregulates their expression during cardiomyocyte differentiation. Regulates p38 MAP kinase activity by mediating stress activation of MAPK14/p38alpha and specifically regulating MAPK14 signaling. Indirectly promotes phosphorylation of MAPK14 and activation of ATF2. The phosphorylation of MAPK14 requires upstream activity of MAP2K4 and MAP2K6. The polypeptide is Cytokine-like nuclear factor N-PAC (GLYR1) (Pongo abelii (Sumatran orangutan)).